Reading from the N-terminus, the 321-residue chain is Transcription factor MYB60 (321 aa).

2 consecutive HTH myb-type domains span residues 9-65 and 66-116; these read KVGI…RPGI and KRGN…KKKI. 2 DNA-binding regions (H-T-H motif) span residues 37–61 and 89–112; these read WRSV…TNYL and WAAI…NTHL. 2 positions are modified to S-nitrosocysteine: cysteine 49 and cysteine 53. Disordered stretches follow at residues 196–215 and 263–291; these read SPKA…EGSI and HHQT…QKKH. A compositionally biased stretch (polar residues) spans 206 to 215; the sequence is QNSSLEEGSI. Residues 273–290 are compositionally biased toward basic and acidic residues; sequence SDDHDHDHEMKMDHDQKK.

As to expression, restricted to stomatal guard cells. Mostly expressed in leaves, cotyledons, hypocotyls, seeds and ripened berry skins.

It localises to the nucleus. Transcription factor involved in the regulation of gene (e.g. drought-regulated and flavonoid biosynthetic genes) expression and stomatal movements leading to negative regulation of responses to drought and responses to other physiological stimuli (e.g. light). The polypeptide is Transcription factor MYB60 (Vitis vinifera (Grape)).